Reading from the N-terminus, the 512-residue chain is Cytochrome P450 84A4 (512 aa).

The helical transmembrane segment at 7–24 (LIVLVPLLLFLFPHLLLR) threads the bilayer. C447 serves as a coordination point for heme.

It belongs to the cytochrome P450 family. Heme serves as cofactor. Expressed in seedlings, roots, stems and inflorescence nodes. Low or no expression in leaves, flowers, seeds and lignifying tissue.

The protein localises to the membrane. In terms of biological role, cytochrome P450 involved in the production of catechol-substituted substrates needed for the arabidopyrones biosynthesis. Converts p-coumaraldehyde into caffealdehyde. This Arabidopsis thaliana (Mouse-ear cress) protein is Cytochrome P450 84A4 (CYP84A4).